Here is a 407-residue protein sequence, read N- to C-terminus: Probable cysteine protease atg4 (407 aa).

C136 (nucleophile) is an active-site residue. Active-site residues include D310 and H312.

This sequence belongs to the peptidase C54 family.

The protein localises to the cytoplasm. The protein resides in the nucleus. Its subcellular location is the preautophagosomal structure. It carries out the reaction [protein]-C-terminal L-amino acid-glycyl-phosphatidylethanolamide + H2O = [protein]-C-terminal L-amino acid-glycine + a 1,2-diacyl-sn-glycero-3-phosphoethanolamine. Cysteine protease that is required for autophagy. Plays a key role in cytoplasm to vacuole transport (Cvt) and autophagy by mediating both proteolytic activation and delipidation of atg8. The protease activity is required for proteolytic activation of atg8 by the cleavage of the C-terminal amino acid of atg8 to reveal a C-terminal glycine. Azg8 ubiquitin-like activity requires the exposure of the glycine at the C-terminus for its conjugation to phosphatidylethanolamine (PE) and its insertion to membranes, which is necessary for autophagy. The atg8-PE conjugate mediates tethering between adjacent membranes and stimulates membrane hemifusion, leading to expansion of the autophagosomal membrane during autophagy. In addition to the protease activity, also catalyzes deconjugation of PE-conjugated forms of atg8 during macroautophagy since atg8 delipidation is required to release the protein from membranes, which facilitates multiple events during macroautophagy, and especially for efficient autophagosome biogenesis, the assembly of atg99-containing tubulovesicular clusters into phagophores/autophagosomes, and for the disassembly of PAS-associated ATG components. Atg8 delipidation by atg4 also recycles atg8-PE generated on inappropriate membranes to maintain a reservoir of unlipidated atg8 that is required for autophagosome formation at the PAS. The protein is Probable cysteine protease atg4 of Aspergillus oryzae (strain ATCC 42149 / RIB 40) (Yellow koji mold).